Reading from the N-terminus, the 160-residue chain is Transcriptional regulator MraZ (160 aa).

SpoVT-AbrB domains are found at residues 5 to 50 and 93 to 136; these read KFET…EGVY and AIEC…SQAE.

The protein belongs to the MraZ family. In terms of assembly, forms oligomers.

The protein localises to the cytoplasm. The protein resides in the nucleoid. The protein is Transcriptional regulator MraZ of Geotalea uraniireducens (strain Rf4) (Geobacter uraniireducens).